The chain runs to 655 residues: Mannosyl-oligosaccharide 1,2-alpha-mannosidase IA (655 aa).

Residues Met-1–Lys-43 lie on the Cytoplasmic side of the membrane. Residues Phe-44–Leu-64 form a helical; Signal-anchor for type II membrane protein membrane-spanning segment. Residues Pro-65–Lys-655 are Lumenal-facing. The cysteines at positions 478 and 510 are disulfide-linked. Asn-515 carries N-linked (GlcNAc...) asparagine glycosylation. Glu-524 serves as the catalytic Proton donor. Thr-635 provides a ligand contact to Ca(2+).

Belongs to the glycosyl hydrolase 47 family. The cofactor is Ca(2+). Post-translationally, N-linked glycan at Asn-515 consists of Man(6)-GlcNAc(2).

It is found in the golgi apparatus membrane. The catalysed reaction is N(4)-(alpha-D-Man-(1-&gt;2)-alpha-D-Man-(1-&gt;2)-alpha-D-Man-(1-&gt;3)-[alpha-D-Man-(1-&gt;2)-alpha-D-Man-(1-&gt;3)-[alpha-D-Man-(1-&gt;2)-alpha-D-Man-(1-&gt;6)]-alpha-D-Man-(1-&gt;6)]-beta-D-Man-(1-&gt;4)-beta-D-GlcNAc-(1-&gt;4)-beta-D-GlcNAc)-L-asparaginyl-[protein] (N-glucan mannose isomer 9A1,2,3B1,2,3) + 4 H2O = N(4)-(alpha-D-Man-(1-&gt;3)-[alpha-D-Man-(1-&gt;3)-[alpha-D-Man-(1-&gt;6)]-alpha-D-Man-(1-&gt;6)]-beta-D-Man-(1-&gt;4)-beta-D-GlcNAc-(1-&gt;4)-beta-D-GlcNAc)-L-asparaginyl-[protein] (N-glucan mannose isomer 5A1,2) + 4 beta-D-mannose. It carries out the reaction N(4)-(alpha-D-Man-(1-&gt;2)-alpha-D-Man-(1-&gt;2)-alpha-D-Man-(1-&gt;3)-[alpha-D-Man-(1-&gt;3)-[alpha-D-Man-(1-&gt;2)-alpha-D-Man-(1-&gt;6)]-alpha-D-Man-(1-&gt;6)]-beta-D-Man-(1-&gt;4)-beta-D-GlcNAc-(1-&gt;4)-beta-D-GlcNAc)-L-asparaginyl-[protein] (N-glucan mannose isomer 8A1,2,3B1,3) + 3 H2O = N(4)-(alpha-D-Man-(1-&gt;3)-[alpha-D-Man-(1-&gt;3)-[alpha-D-Man-(1-&gt;6)]-alpha-D-Man-(1-&gt;6)]-beta-D-Man-(1-&gt;4)-beta-D-GlcNAc-(1-&gt;4)-beta-D-GlcNAc)-L-asparaginyl-[protein] (N-glucan mannose isomer 5A1,2) + 3 beta-D-mannose. Its pathway is protein modification; protein glycosylation. With respect to regulation, inhibited by both 1-deoxymannojirimycin and kifunensine. Its function is as follows. Involved in the maturation of Asn-linked oligosaccharides. Progressively trim alpha-1,2-linked mannose residues from Man(9)GlcNAc(2) to produce Man(5)GlcNAc(2). The chain is Mannosyl-oligosaccharide 1,2-alpha-mannosidase IA (Man1a1) from Mus musculus (Mouse).